The sequence spans 277 residues: Small ribosomal subunit protein uS2 (277 aa).

Positions M1–E78 are disordered.

Belongs to the universal ribosomal protein uS2 family.

This Natronomonas pharaonis (strain ATCC 35678 / DSM 2160 / CIP 103997 / JCM 8858 / NBRC 14720 / NCIMB 2260 / Gabara) (Halobacterium pharaonis) protein is Small ribosomal subunit protein uS2.